A 1047-amino-acid polypeptide reads, in one-letter code: Ribonucleoside-diphosphate reductase subunit alpha (1047 aa).

3 ATP-cone domains span residues 9 to 111 (CTIV…KAHR), 118 to 219 (LSVI…ARVR), and 237 to 327 (FEVL…EALD). Residues threonine 442, 457–458 (SC), glycine 486, 670–674 (NLCTE), and 857–861 (PTATI) contribute to the substrate site. The cysteines at positions 458 and 687 are disulfide-linked. Asparagine 670 (proton acceptor) is an active-site residue. The active-site Cysteine radical intermediate is cysteine 672. The active-site Proton acceptor is glutamate 674.

Belongs to the ribonucleoside diphosphate reductase large chain family. As to quaternary structure, tetramer of two alpha and two beta subunits.

It carries out the reaction a 2'-deoxyribonucleoside 5'-diphosphate + [thioredoxin]-disulfide + H2O = a ribonucleoside 5'-diphosphate + [thioredoxin]-dithiol. Under complex allosteric control mediated by deoxynucleoside triphosphates and ATP binding. The type of nucleotide bound at the specificity site determines substrate preference. It seems probable that ATP makes the enzyme reduce CDP and UDP, dGTP favors ADP reduction and dTTP favors GDP reduction. Its function is as follows. Provides the precursors necessary for DNA synthesis. Catalyzes the biosynthesis of deoxyribonucleotides from the corresponding ribonucleotides. The sequence is that of Ribonucleoside-diphosphate reductase subunit alpha (nrdA) from Chlamydia muridarum (strain MoPn / Nigg).